A 99-amino-acid polypeptide reads, in one-letter code: Large ribosomal subunit protein uL23 (99 aa).

The protein belongs to the universal ribosomal protein uL23 family. Part of the 50S ribosomal subunit. Contacts protein L29, and trigger factor when it is bound to the ribosome.

Functionally, one of the early assembly proteins it binds 23S rRNA. One of the proteins that surrounds the polypeptide exit tunnel on the outside of the ribosome. Forms the main docking site for trigger factor binding to the ribosome. The sequence is that of Large ribosomal subunit protein uL23 from Xanthomonas campestris pv. campestris (strain B100).